We begin with the raw amino-acid sequence, 443 residues long: D(2) dopamine receptor (443 aa).

At 1-37 (MDPLNLSWYDDDLERQNWSRPFNGSDGKADRPHYNYY) the chain is on the extracellular side. N-linked (GlcNAc...) asparagine glycosylation is found at Asn-5, Asn-17, and Asn-23. The helical transmembrane segment at 38-60 (ATLLTLLIAVIVFGNVLVCMAVS) threads the bilayer. Residues 61–70 (REKALQTTTN) are Cytoplasmic-facing. Residues 71–93 (YLIVSLAVADLLVATLVMPWVVY) traverse the membrane as a helical segment. The Extracellular portion of the chain corresponds to 94 to 108 (LEVVGEWKFSRIHCD). The cysteines at positions 107 and 182 are disulfide-linked. The helical transmembrane segment at 109-130 (IFVTLDVMMCTASILNLCAISI) threads the bilayer. Over 131 to 151 (DRYTAVAMPMLYNTRYSSKRR) the chain is Cytoplasmic. Residues 152-172 (VTVMISIVWVLSFTISCPLLF) form a helical membrane-spanning segment. The Extracellular segment spans residues 173–188 (GLNNADQNECIIANPA). A helical membrane pass occupies residues 189-213 (FVVYSSIVSFYVPFIVTLLVYIKIY). The interval 211-373 (KIYIVLRRRR…SQQKEKKATQ (163 aa)) is interaction with PPP1R9B. Topologically, residues 214–373 (IVLRRRRKRV…SQQKEKKATQ (160 aa)) are cytoplasmic. The disordered stretch occupies residues 281 to 332 (MEMLSSTSPPERTRYSPIPPSHHQLTLPDPSHHGLHSTPDSPAKPEKNGHAK). A compositionally biased stretch (basic and acidic residues) spans 323–332 (AKPEKNGHAK). The chain crosses the membrane as a helical span at residues 374–395 (MLAIVLGVFIICWLPFFITHIL). Residues 396–409 (NIHCDCNIPPVLYS) are Extracellular-facing. A disulfide bridge links Cys-399 with Cys-401. The chain crosses the membrane as a helical span at residues 410 to 431 (AFTWLGYVNSAVNPIIYTTFNI). The Cytoplasmic segment spans residues 432 to 443 (EFRKAFLKILHC). Cys-443 carries the S-palmitoyl cysteine lipid modification.

The protein belongs to the G-protein coupled receptor 1 family. Forms homo- and heterooligomers with DRD4. The interaction with DRD4 may modulate agonist-induced downstream signaling. Interacts with CADPS and CADPS2. Interacts with GPRASP1, PPP1R9B and CLIC6. Interacts with ARRB2. Interacts with HTR2A. Interacts with GNAI2 isoform sGi2, the interaction allows the creation of an intracellular pool of DRD2 that can be released to cell surface upon agonist stimulation. Interacts with DRD1. Interacts with KCNA2. Post-translationally, palmitoylated. Palmitoylation which is required for proper localization to the plasma membrane and stability of the receptor could be carried on by ZDHHC4, ZDHHC3 and ZDHHC8. Expressed in the anterior pituitary gland.

It is found in the cell membrane. It localises to the golgi apparatus membrane. Functionally, dopamine receptor whose activity is mediated by G proteins which inhibit adenylyl cyclase. Positively regulates postnatal regression of retinal hyaloid vessels via suppression of VEGFR2/KDR activity, downstream of OPN5. This chain is D(2) dopamine receptor (DRD2), found in Homo sapiens (Human).